The chain runs to 387 residues: 3-ketoacyl-CoA thiolase (387 aa).

Residue C91 is the Acyl-thioester intermediate of the active site. Catalysis depends on proton acceptor residues H343 and C373.

It belongs to the thiolase-like superfamily. Thiolase family. As to quaternary structure, heterotetramer of two alpha chains (FadB) and two beta chains (FadA).

The protein localises to the cytoplasm. It carries out the reaction an acyl-CoA + acetyl-CoA = a 3-oxoacyl-CoA + CoA. The protein operates within lipid metabolism; fatty acid beta-oxidation. Functionally, catalyzes the final step of fatty acid oxidation in which acetyl-CoA is released and the CoA ester of a fatty acid two carbons shorter is formed. This Shewanella sp. (strain MR-4) protein is 3-ketoacyl-CoA thiolase.